The sequence spans 328 residues: Phosphate acyltransferase (328 aa).

The protein belongs to the PlsX family. Homodimer. Probably interacts with PlsY.

Its subcellular location is the cytoplasm. It catalyses the reaction a fatty acyl-[ACP] + phosphate = an acyl phosphate + holo-[ACP]. Its pathway is lipid metabolism; phospholipid metabolism. Its function is as follows. Catalyzes the reversible formation of acyl-phosphate (acyl-PO(4)) from acyl-[acyl-carrier-protein] (acyl-ACP). This enzyme utilizes acyl-ACP as fatty acyl donor, but not acyl-CoA. This chain is Phosphate acyltransferase, found in Staphylococcus saprophyticus subsp. saprophyticus (strain ATCC 15305 / DSM 20229 / NCIMB 8711 / NCTC 7292 / S-41).